The chain runs to 260 residues: Hemin import ATP-binding protein HmuV (260 aa).

An ABC transporter domain is found at 7-243 (IQASNISVTF…ERIEQVYGYS (237 aa)). 39 to 46 (GPNGAGKS) is a binding site for ATP.

It belongs to the ABC transporter superfamily. Heme (hemin) importer (TC 3.A.1.14.5) family. As to quaternary structure, the complex is composed of two ATP-binding proteins (HmuV), two transmembrane proteins (HmuU) and a solute-binding protein (HmuT).

Its subcellular location is the cell inner membrane. Functionally, part of the ABC transporter complex HmuTUV involved in hemin import. Responsible for energy coupling to the transport system. This is Hemin import ATP-binding protein HmuV from Vibrio anguillarum (strain ATCC 68554 / 775) (Listonella anguillarum).